We begin with the raw amino-acid sequence, 118 residues long: Elongin-B (118 aa).

M1 is subject to N-acetylmethionine. Residues 1 to 66 (MDVFLMIRRH…LGECGFTSQT (66 aa)) enclose the Ubiquitin-like domain. A Phosphothreonine modification is found at T84. The interval 92 to 118 (PFSSPPELPDVMKPQDSGSSANEQAVQ) is disordered. Positions 107–118 (DSGSSANEQAVQ) are enriched in polar residues. S108 and S111 each carry phosphoserine.

The protein belongs to the Elongin B family. As to quaternary structure, heterotrimer of an A (ELOA, ELOA2 or ELOA3P), ELOB and ELOC subunit. The elongin BC complex interacts with EPOP; leading to recruit the elongin BC complex to Polycomb group (PcG) target genes, thereby restricting excessive activity of the PRC2/EED-EZH2 complex. Component of multiple cullin-RING E3 ubiquitin-protein ligase complexes composed of Elongin BC (ELOB and ELOC), a cullin (either CUL2 or CUL5), a catalytic subunit (either RBX1 or RNF7/RBX2), as well as a substrate adapter protein that can be either ASB2, ASB9, ASB11, KLHDC2, KLHDC3, KLHDC10, APPBP2, FEM1A, FEM1B, FEM1C, LRR1, PCMTD1, SOCS1, SOCS2, SOCS5, SPSB1, SPSB3, ELOA, VHL, WSB1 or RAB40C. As part of the Elongin BC E3 ubiquitin ligase complex; interacts with NRBP1. May also interact with DCUN1D1, DCUN1D2, DCUN1D3 and DCUN1D5. May form oligomers as a KLHDC2/KLHDC3-ELOB-ELOC complex; this interaction is autoinhibitory for the E3 ligase complex as the substrate-binding site of KLHDC2/KLHDC3 is blocked in the oligomer. (Microbial infection) Following infection by HIV-1 virus, component of a cullin-5-RING E3 ubiquitin-protein ligase complex (ECS complex) hijacked by the HIV-1 Vif protein. In terms of assembly, (Microbial infection) Substrate adapter protein can be a viral protein such as HIV Vif. As to quaternary structure, (Microbial infection) Interacts with molluscum contagiosum virus MC132. (Microbial infection) Interacts with herpes virus 8 virus protein LANA1.

It is found in the nucleus. The protein operates within protein modification; protein ubiquitination. SIII, also known as elongin, is a general transcription elongation factor that increases the RNA polymerase II transcription elongation past template-encoded arresting sites. Subunit A is transcriptionally active and its transcription activity is strongly enhanced by binding to the dimeric complex of the SIII regulatory subunits B and C (elongin BC complex). In embryonic stem cells, the elongin BC complex is recruited by EPOP to Polycomb group (PcG) target genes in order generate genomic region that display both active and repressive chromatin properties, an important feature of pluripotent stem cells. Functionally, core component of multiple cullin-2 and cullin-5-RING E3 ubiquitin-protein ligase complexes (ECS complexes), which mediate the ubiquitination of target proteins. By binding to BC-box motifs it seems to link target recruitment subunits, like VHL and members of the SOCS box family, to Cullin/RBX1 modules that activate E2 ubiquitination enzymes. Component the von Hippel-Lindau ubiquitination complex CBC(VHL). A number of ECS complexes (containing either KLHDC2, KLHDC3, KLHDC10, APPBP2, FEM1A, FEM1B or FEM1C as substrate-recognition component) are part of the DesCEND (destruction via C-end degrons) pathway, which recognizes a C-degron located at the extreme C terminus of target proteins, leading to their ubiquitination and degradation. The ECS(ASB9) complex mediates ubiquitination and degradation of CKB. As part of a multisubunit ubiquitin ligase complex, polyubiquitinates monoubiquitinated POLR2A. ECS(LRR1) ubiquitinates MCM7 and promotes CMG replisome disassembly by VCP and chromatin extraction during S-phase. As part of the ECS(RAB40C) complex, mediates ANKRD28 ubiquitination and degradation, thereby inhibiting protein phosphatase 6 (PP6) complex activity and focal adhesion assembly during cell migration. In terms of biological role, (Microbial infection) Following infection by HIV-1 virus, component of a cullin-5-RING E3 ubiquitin-protein ligase complex (ECS complex) hijacked by the HIV-1 Vif protein, which catalyzes ubiquitination and degradation of APOBEC3F and APOBEC3G. The complex can also ubiquitinate APOBEC3H to some extent. This Homo sapiens (Human) protein is Elongin-B.